Consider the following 67-residue polypeptide: Large ribosomal subunit protein bL32 (67 aa).

Residues 1–19 are compositionally biased toward basic residues; it reads MAVPKRKMSRANTRMRRSQ. The disordered stretch occupies residues 1–22; sequence MAVPKRKMSRANTRMRRSQWKA.

The protein belongs to the bacterial ribosomal protein bL32 family.

This Kocuria rhizophila (strain ATCC 9341 / DSM 348 / NBRC 103217 / DC2201) protein is Large ribosomal subunit protein bL32.